A 253-amino-acid polypeptide reads, in one-letter code: FGFR1 oncogene partner 2 homolog (253 aa).

Residues 5 to 104 (IEKALADAKA…SALELIMSKY (100 aa)) are a coiled coil. Phosphoserine is present on S140. The stretch at 160–223 (LERRHLEANQ…LREILQITRE (64 aa)) forms a coiled coil. The segment at 231 to 253 (DDASESTSLSALVTNSDLSLRKS) is disordered. The segment covering 235-253 (ESTSLSALVTNSDLSLRKS) has biased composition (polar residues).

Belongs to the SIKE family.

The protein localises to the cytoplasm. In terms of biological role, may be involved in wound healing pathway. In Mus musculus (Mouse), this protein is FGFR1 oncogene partner 2 homolog (Fgfr1op2).